Reading from the N-terminus, the 311-residue chain is MRRAALWLWLCALALRLQPALPQIVAVNVPPEDQDGSGDDSDNFSGSGTGALPDTLSRQTPSTWKDVWLLTATPTAPEPTSSNTETAFTSVLPAGEKPEEGEPVLHVEAEPGFTARDKEKEVTTRPRETVQLPITQRASTVRVTTAQAAVTSHPHGGMQPGLHETSAPTAPGQPDHQPPRVEGGGTSVIKEVVEDGTANQLPAGEGSGEQDFTFETSGENTAVAAVEPGLRNQPPVDEGATGASQSLLDRKEVLGGVIAGGLVGLIFAVCLVAFMLYRMKKKDEGSYSLEEPKQANGGAYQKPTKQEEFYA.

The N-terminal stretch at 1-22 (MRRAALWLWLCALALRLQPALP) is a signal peptide. At 23–255 (QIVAVNVPPE…SLLDRKEVLG (233 aa)) the chain is on the extracellular side. Disordered regions lie at residues 29-59 (VPPEDQDGSGDDSDNFSGSGTGALPDTLSRQ) and 152-184 (SHPHGGMQPGLHETSAPTAPGQPDHQPPRVEGG). Acidic residues predominate over residues 32 to 42 (EDQDGSGDDSD). A glycan (O-linked (Xyl...) (chondroitin sulfate) serine) is linked at Ser-37. The N-linked (GlcNAc...) asparagine glycan is linked to Asn-43. 2 O-linked (Xyl...) (heparan sulfate) serine glycosylation sites follow: Ser-45 and Ser-47. O-linked (Xyl...) (chondroitin sulfate) serine glycosylation is found at Ser-207 and Ser-217. A helical transmembrane segment spans residues 256–276 (GVIAGGLVGLIFAVCLVAFML). The Cytoplasmic portion of the chain corresponds to 277–311 (YRMKKKDEGSYSLEEPKQANGGAYQKPTKQEEFYA). A disordered region spans residues 285–311 (GSYSLEEPKQANGGAYQKPTKQEEFYA). Ser-286 is subject to Phosphoserine.

The protein belongs to the syndecan proteoglycan family. Interacts with CDCP1. Interacts (via C-terminus) with TIAM1 (via PDZ domain). Interacts with MDK. Shedding is enhanced by a number of factors such as heparanase, thrombin or EGF. Also by stress and wound healing. PMA-mediated shedding is inhibited by TIMP3.

Its subcellular location is the membrane. It is found in the secreted. The protein resides in the extracellular exosome. Functionally, cell surface proteoglycan that contains both heparan sulfate and chondroitin sulfate and that links the cytoskeleton to the interstitial matrix. Regulates exosome biogenesis in concert with SDCBP and PDCD6IP. Able to induce its own expression in dental mesenchymal cells and also in the neighboring dental epithelial cells via an MSX1-mediated pathway. This is Syndecan-1 from Mus musculus (Mouse).